The primary structure comprises 413 residues: 3-isopropylmalate dehydratase large subunit (413 aa).

The [4Fe-4S] cluster site is built by Cys295, Cys353, and Cys356.

It belongs to the aconitase/IPM isomerase family. LeuC type 2 subfamily. Heterodimer of LeuC and LeuD. The cofactor is [4Fe-4S] cluster.

The enzyme catalyses (2R,3S)-3-isopropylmalate = (2S)-2-isopropylmalate. Its pathway is amino-acid biosynthesis; L-leucine biosynthesis; L-leucine from 3-methyl-2-oxobutanoate: step 2/4. In terms of biological role, catalyzes the isomerization between 2-isopropylmalate and 3-isopropylmalate, via the formation of 2-isopropylmaleate. The protein is 3-isopropylmalate dehydratase large subunit of Pyrobaculum calidifontis (strain DSM 21063 / JCM 11548 / VA1).